The primary structure comprises 641 residues: Mediator of RNA polymerase II transcription subunit 17 (641 aa).

Residues 159–186 adopt a coiled-coil conformation; the sequence is RLQSFNAAADKLLKSAARLETEVASETR.

Belongs to the Mediator complex subunit 17 family. Component of the Mediator complex.

It localises to the nucleus. In terms of biological role, component of the Mediator complex, a coactivator involved in the regulated transcription of nearly all RNA polymerase II-dependent genes. Mediator functions as a bridge to convey information from gene-specific regulatory proteins to the basal RNA polymerase II transcription machinery. Mediator is recruited to promoters by direct interactions with regulatory proteins and serves as a scaffold for the assembly of a functional preinitiation complex with RNA polymerase II and the general transcription factors. The protein is Mediator of RNA polymerase II transcription subunit 17 (srb4) of Aspergillus clavatus (strain ATCC 1007 / CBS 513.65 / DSM 816 / NCTC 3887 / NRRL 1 / QM 1276 / 107).